The chain runs to 302 residues: Sulfate adenylyltransferase subunit 2 (302 aa).

This sequence belongs to the PAPS reductase family. CysD subfamily. In terms of assembly, heterodimer composed of CysD, the smaller subunit, and CysN.

The catalysed reaction is sulfate + ATP + H(+) = adenosine 5'-phosphosulfate + diphosphate. The protein operates within sulfur metabolism; hydrogen sulfide biosynthesis; sulfite from sulfate: step 1/3. Functionally, with CysN forms the ATP sulfurylase (ATPS) that catalyzes the adenylation of sulfate producing adenosine 5'-phosphosulfate (APS) and diphosphate, the first enzymatic step in sulfur assimilation pathway. APS synthesis involves the formation of a high-energy phosphoric-sulfuric acid anhydride bond driven by GTP hydrolysis by CysN coupled to ATP hydrolysis by CysD. The sequence is that of Sulfate adenylyltransferase subunit 2 from Citrobacter koseri (strain ATCC BAA-895 / CDC 4225-83 / SGSC4696).